An 81-amino-acid chain; its full sequence is 2,3-bisphosphoglycerate-independent phosphoglycerate mutase (81 aa).

The active-site Phosphoserine intermediate is the Ser-14. Residue Ser-14 participates in Mn(2+) binding. A substrate-binding site is contributed by His-75.

This sequence belongs to the BPG-independent phosphoglycerate mutase family. In terms of assembly, monomer. Mn(2+) is required as a cofactor.

The catalysed reaction is (2R)-2-phosphoglycerate = (2R)-3-phosphoglycerate. The protein operates within carbohydrate degradation; glycolysis; pyruvate from D-glyceraldehyde 3-phosphate: step 3/5. Catalyzes the interconversion of 2-phosphoglycerate and 3-phosphoglycerate. In Tomato big bud phytoplasma, this protein is 2,3-bisphosphoglycerate-independent phosphoglycerate mutase (gpmI).